The chain runs to 472 residues: uncharacterized protein (472 aa).

The next 6 membrane-spanning stretches (helical) occupy residues I4–I24, A27–F47, A56–V76, I99–V119, L140–T160, and I176–L196. Residues G209–A229 form a disordered region. The segment covering A220–A229 has biased composition (low complexity). The next 5 membrane-spanning stretches (helical) occupy residues A240–L260, A286–F306, I323–I343, T372–M392, and I448–L468.

Belongs to the CitM (TC 2.A.11) transporter family.

It is found in the cell membrane. This is an uncharacterized protein from Bacillus subtilis (strain 168).